We begin with the raw amino-acid sequence, 261 residues long: Thiazole synthase (261 aa).

K102 (schiff-base intermediate with DXP) is an active-site residue. Residues G163, 189–190, and 211–212 each bind 1-deoxy-D-xylulose 5-phosphate; these read AG and NT.

It belongs to the ThiG family. As to quaternary structure, homotetramer. Forms heterodimers with either ThiH or ThiS.

It is found in the cytoplasm. The enzyme catalyses [ThiS sulfur-carrier protein]-C-terminal-Gly-aminoethanethioate + 2-iminoacetate + 1-deoxy-D-xylulose 5-phosphate = [ThiS sulfur-carrier protein]-C-terminal Gly-Gly + 2-[(2R,5Z)-2-carboxy-4-methylthiazol-5(2H)-ylidene]ethyl phosphate + 2 H2O + H(+). It functions in the pathway cofactor biosynthesis; thiamine diphosphate biosynthesis. Its function is as follows. Catalyzes the rearrangement of 1-deoxy-D-xylulose 5-phosphate (DXP) to produce the thiazole phosphate moiety of thiamine. Sulfur is provided by the thiocarboxylate moiety of the carrier protein ThiS. In vitro, sulfur can be provided by H(2)S. In Acinetobacter baumannii (strain SDF), this protein is Thiazole synthase.